The sequence spans 327 residues: Movement protein (327 aa).

Positions 297-327 form a coiled coil; the sequence is SASSSNTENELARVSQNIDLLKNKLKEICGE.

This sequence belongs to the caulimoviridae movement protein family. In terms of assembly, homotrimer, through the coiled-coil domain. Interacts with VAP. May interact (via N-terminus) with host prenylated Rab acceptor protein 1D (PRA1D).

It localises to the host cell junction. The protein resides in the host plasmodesma. Its function is as follows. Transports viral genome to neighboring plant cells directly through plasmosdesmata, without any budding. The movement protein allows efficient cell to cell propagation, by bypassing the host cell wall barrier. Acts by forming tubules structures that increase the size exclusion limit (SEL) of plasmodesmata, thereby allowing viral ribonucleocapsids to spread directly to neighboring cells. This is Movement protein from Cauliflower mosaic virus (strain CM-1841) (CaMV).